A 576-amino-acid chain; its full sequence is Trehalase (576 aa).

Residues 1–20 (MTWELHLLLLLGLGLRSQEA) form the signal peptide. N-linked (GlcNAc...) asparagine glycosylation occurs at Asn75. Substrate contacts are provided by residues Arg165, 172 to 173 (WD), Asn209, and 218 to 220 (RSQ). An N-linked (GlcNAc...) asparagine glycan is attached at Asn258. Residues 283-285 (RPE) and Gly316 contribute to the substrate site. Asp318 acts as the Proton donor/acceptor in catalysis. Asn366 is a glycosylation site (N-linked (GlcNAc...) asparagine). The active-site Proton donor/acceptor is Glu511. Glu526 serves as a coordination point for substrate. Residue Ser553 is the site of GPI-anchor amidated serine attachment. The propeptide at 554–576 (GTQLASLGPHCLVAALLLSLLLQ) is removed in mature form.

This sequence belongs to the glycosyl hydrolase 37 family. As to quaternary structure, homodimer; disulfide-linked.

The protein resides in the cell membrane. The enzyme catalyses alpha,alpha-trehalose + H2O = alpha-D-glucose + beta-D-glucose. Its function is as follows. Intestinal trehalase is probably involved in the hydrolysis of ingested trehalose. The chain is Trehalase from Mus musculus (Mouse).